A 554-amino-acid chain; its full sequence is Intraflagellar transport protein 56 (554 aa).

Residues methionine 1–lysine 23 form a disordered region. 4 TPR repeats span residues glutamate 57–asparagine 90, aspartate 92–arginine 125, isoleucine 151–phenylalanine 184, and alanine 468–arginine 501.

It belongs to the IFT56 family. In terms of assembly, component of the IFT complex B.

The protein resides in the cell projection. The protein localises to the cilium. Its function is as follows. Component of the intraflagellar transport (IFT) complex B required for transport of proteins in the motile cilium. Required for transport of specific ciliary cargo proteins related to motility, while it is neither required for IFT complex B assembly or motion nor for cilium assembly. Plays a key role in maintaining the integrity of the IFT complex B and the proper ciliary localization of the IFT complex B components. Essential for maintaining proper microtubule organization within the ciliary axoneme. This is Intraflagellar transport protein 56 from Xenopus tropicalis (Western clawed frog).